Consider the following 878-residue polypeptide: NUT family member 2E (878 aa).

Disordered stretches follow at residues 273–324 (WSQG…DDSC), 417–511 (QKSQ…VPEE), 527–560 (LLGP…PPDP), 622–757 (RLPP…EEEE), and 775–878 (WLPQ…HCSQ). Pro residues-rich tracts occupy residues 278–288 (PLPPPPPPAAQ) and 427–444 (CLPP…PPAP). Basic and acidic residues-rich tracts occupy residues 537–551 (EPEK…KQPQ) and 622–631 (RLPPLKEKQH).

It belongs to the NUT family.

The sequence is that of NUT family member 2E (NUTM2E) from Homo sapiens (Human).